The primary structure comprises 300 residues: Putative S-adenosyl-L-methionine-dependent methyltransferase MUL_0817 (300 aa).

Residues D127 and 156-157 each bind S-adenosyl-L-methionine; that span reads DL.

It belongs to the UPF0677 family.

In terms of biological role, exhibits S-adenosyl-L-methionine-dependent methyltransferase activity. This Mycobacterium ulcerans (strain Agy99) protein is Putative S-adenosyl-L-methionine-dependent methyltransferase MUL_0817.